Reading from the N-terminus, the 311-residue chain is D-alanine--D-alanine ligase (311 aa).

In terms of domain architecture, ATP-grasp spans 105–306 (KQLYIHAGLP…FSALLDRLIE (202 aa)). 133 to 188 (ADRLGLPVVVKPEHEGSSIGLSIVRNRDQLAAAVETGWQYDRRCLIEKYVHGIEIT) is a binding site for ATP. Residues aspartate 261, glutamate 273, and asparagine 275 each contribute to the Mg(2+) site.

It belongs to the D-alanine--D-alanine ligase family. It depends on Mg(2+) as a cofactor. Requires Mn(2+) as cofactor.

It localises to the cytoplasm. The catalysed reaction is 2 D-alanine + ATP = D-alanyl-D-alanine + ADP + phosphate + H(+). It functions in the pathway cell wall biogenesis; peptidoglycan biosynthesis. Functionally, cell wall formation. The sequence is that of D-alanine--D-alanine ligase from Syntrophobacter fumaroxidans (strain DSM 10017 / MPOB).